We begin with the raw amino-acid sequence, 515 residues long: Maturase K (515 aa).

It belongs to the intron maturase 2 family. MatK subfamily.

It localises to the plastid. Its subcellular location is the chloroplast. Functionally, usually encoded in the trnK tRNA gene intron. Probably assists in splicing its own and other chloroplast group II introns. The sequence is that of Maturase K from Picea mariana (Black spruce).